We begin with the raw amino-acid sequence, 745 residues long: Elongation factor G, mitochondrial (745 aa).

The region spanning 40 to 317 (EKIRNIGISA…AVLDYLPNPG (278 aa)) is the tr-type G domain. Residues 49 to 56 (AHIDSGKT), 116 to 120 (DTPGH), and 170 to 173 (NKLD) contribute to the GTP site.

It belongs to the TRAFAC class translation factor GTPase superfamily. Classic translation factor GTPase family. EF-G/EF-2 subfamily.

The protein localises to the mitochondrion. Its pathway is protein biosynthesis; polypeptide chain elongation. Mitochondrial GTPase that catalyzes the GTP-dependent ribosomal translocation step during translation elongation. During this step, the ribosome changes from the pre-translocational (PRE) to the post-translocational (POST) state as the newly formed A-site-bound peptidyl-tRNA and P-site-bound deacylated tRNA move to the P and E sites, respectively. Catalyzes the coordinated movement of the two tRNA molecules, the mRNA and conformational changes in the ribosome. Essential during development as it acts as a retrograde signal from mitochondria to the nucleus to slow down cell proliferation if mitochondrial energy output is low. The chain is Elongation factor G, mitochondrial from Drosophila willistoni (Fruit fly).